Here is a 677-residue protein sequence, read N- to C-terminus: Bargin (677 aa).

Low complexity-rich tracts occupy residues 1–13 (MDRGLPGPATPAV) and 29–39 (APHAAAGPDGQ). Disordered stretches follow at residues 1 to 39 (MDRGLPGPATPAVTPQPPARPQDDEEAAAPHAAAGPDGQ) and 168 to 190 (SQATKNSGSSQGLGGSPGSHSHT). Positions 25-270 (EEAAAPHAAA…RENHGQADHS (246 aa)) constitute a BAR domain. 3 positions are modified to phosphoserine: Ser-183, Ser-270, and Ser-272. In terms of domain architecture, Rho-GAP spans 284-477 (VSLATHLQEL…ALIQSADTLF (194 aa)). Residues 504 to 577 (SEELPSTAVP…DMARRSTGSL (74 aa)) form a disordered region. Pro residues predominate over residues 516-530 (ATTPAPAPAPAPAPA). Phosphoserine is present on residues Ser-552 and Ser-558. Positions 574-677 (TGSLAAAVET…IADLTEGLED (104 aa)) are mediates non-covalent binding of poly-ubiquitin chains.

Expressed in brain (at protein level).

Its subcellular location is the cell membrane. The protein localises to the cytoplasm. The protein resides in the cytosol. GTPase activating protein (GAP) which specifically converts GTP-bound RAC1 and CDC42 in their inactive GDP-bound form. The GAP activity is enhanced by the non-covalent binding of K-29 and K-48 polyubiquitin chains. This chain is Bargin, found in Homo sapiens (Human).